The chain runs to 800 residues: Putative antiporter subunit mnhA2 (800 aa).

20 helical membrane passes run 1-21 (MSLV…LLMS), 33-53 (IALV…PSVA), 78-98 (GLSL…FFYA), 118-138 (LFMF…MYIF), 167-187 (FMIT…LYIM), 207-227 (GLFI…SAQF), 241-261 (TPVS…FLLL), 273-293 (YVYI…ITAL), 300-320 (GILA…VGIG), 331-351 (IASI…NHAI), 387-407 (LVMT…GFLS), 424-444 (FSLI…VFTF), 472-492 (PWLF…IFFV), 527-547 (GFNI…VLAI), 595-615 (IIMT…RIGL), 627-647 (GALE…LIFI), 651-671 (LTMV…FIAM), 676-696 (LALT…VSFS), 712-732 (IIKI…IFIT), and 768-788 (LDTL…YTLL).

The protein belongs to the CPA3 antiporters (TC 2.A.63) subunit A family. May form a heterooligomeric complex that consists of seven subunits: mnhA2, mnhB2, mnhC2, mnhD2, mnhE2, mnhF2 and mnhG2.

It localises to the cell membrane. The polypeptide is Putative antiporter subunit mnhA2 (mnhA2) (Staphylococcus aureus (strain MSSA476)).